We begin with the raw amino-acid sequence, 437 residues long: GTPase Obg (437 aa).

Residues 2–160 (SMFLDTAKIS…RQLELELKIL (159 aa)) form the Obg domain. The OBG-type G domain maps to 161 to 338 (ADVGLVGFPS…LLEATAELLA (178 aa)). GTP is bound by residues 167-174 (GFPSVGKS), 192-196 (FTTIV), 214-217 (DLPG), 284-287 (NKMD), and 319-321 (SSL). Mg(2+) contacts are provided by S174 and T194. An OCT domain is found at 359-437 (GFAEAEKEFE…IGKFEFEFVD (79 aa)).

The protein belongs to the TRAFAC class OBG-HflX-like GTPase superfamily. OBG GTPase family. In terms of assembly, monomer. Mg(2+) is required as a cofactor.

The protein localises to the cytoplasm. Functionally, an essential GTPase which binds GTP, GDP and possibly (p)ppGpp with moderate affinity, with high nucleotide exchange rates and a fairly low GTP hydrolysis rate. Plays a role in control of the cell cycle, stress response, ribosome biogenesis and in those bacteria that undergo differentiation, in morphogenesis control. The polypeptide is GTPase Obg (Streptococcus pyogenes serotype M3 (strain ATCC BAA-595 / MGAS315)).